Reading from the N-terminus, the 46-residue chain is Defensin-1 (46 aa).

Intrachain disulfides connect Cys3/Cys46, Cys14/Cys35, Cys20/Cys40, and Cys24/Cys42.

Belongs to the DEFL family. Epidermis and vascular bundles of pods, stems, roots, leaves and wet or dry seeds.

Functionally, possesses antifungal activity sensitive to inorganic cations. The sequence is that of Defensin-1 from Pisum sativum (Garden pea).